The sequence spans 95 residues: Protein TusB (95 aa).

The protein belongs to the DsrH/TusB family. As to quaternary structure, heterohexamer, formed by a dimer of trimers. The hexameric TusBCD complex contains 2 copies each of TusB, TusC and TusD. The TusBCD complex interacts with TusE.

It is found in the cytoplasm. In terms of biological role, part of a sulfur-relay system required for 2-thiolation of 5-methylaminomethyl-2-thiouridine (mnm(5)s(2)U) at tRNA wobble positions. This Escherichia fergusonii (strain ATCC 35469 / DSM 13698 / CCUG 18766 / IAM 14443 / JCM 21226 / LMG 7866 / NBRC 102419 / NCTC 12128 / CDC 0568-73) protein is Protein TusB.